The chain runs to 225 residues: UPF0758 protein NMC1174 (225 aa).

Residues 102 to 224 (VLSDPDTVAD…VRSFRQLGLM (123 aa)) enclose the MPN domain. His-173, His-175, and Asp-186 together coordinate Zn(2+). Positions 173–186 (HNHPGGSPEPSQED) match the JAMM motif motif.

This sequence belongs to the UPF0758 family.

The sequence is that of UPF0758 protein NMC1174 from Neisseria meningitidis serogroup C / serotype 2a (strain ATCC 700532 / DSM 15464 / FAM18).